A 472-amino-acid chain; its full sequence is Adenosylhomocysteinase (472 aa).

Substrate is bound by residues T64, D138, and E198. An NAD(+)-binding site is contributed by 199–201; sequence TTT. Residues K228 and D232 each contribute to the substrate site. NAD(+) contacts are provided by residues N233, 262–267, E285, N320, 341–343, and N386; these read GFGDVG and IGH.

This sequence belongs to the adenosylhomocysteinase family. It depends on NAD(+) as a cofactor.

It localises to the cytoplasm. It carries out the reaction S-adenosyl-L-homocysteine + H2O = L-homocysteine + adenosine. The protein operates within amino-acid biosynthesis; L-homocysteine biosynthesis; L-homocysteine from S-adenosyl-L-homocysteine: step 1/1. Functionally, may play a key role in the regulation of the intracellular concentration of adenosylhomocysteine. The polypeptide is Adenosylhomocysteinase (Prochlorococcus marinus (strain MIT 9215)).